Here is a 254-residue protein sequence, read N- to C-terminus: UPF0246 protein Fphi_1075 (254 aa).

This sequence belongs to the UPF0246 family.

This chain is UPF0246 protein Fphi_1075, found in Francisella philomiragia subsp. philomiragia (strain ATCC 25017 / CCUG 19701 / FSC 153 / O#319-036).